The sequence spans 335 residues: Urokinase plasminogen activator surface receptor (335 aa).

An N-terminal signal peptide occupies residues 1–22; that stretch reads MGHPPLLPLLLLLHTCVPASWG. UPAR/Ly6 domains lie at 23 to 114, 115 to 213, and 214 to 305; these read LRCM…RSRY, LECI…PQNG, and RQCY…YRSG. Intrachain disulfides connect Cys-25-Cys-46, Cys-28-Cys-34, and Cys-39-Cys-67. Asn-74 carries N-linked (GlcNAc...) asparagine glycosylation. 11 disulfide bridges follow: Cys-93-Cys-98, Cys-117-Cys-144, Cys-120-Cys-127, Cys-137-Cys-169, Cys-175-Cys-192, Cys-193-Cys-198, Cys-216-Cys-244, Cys-219-Cys-227, Cys-237-Cys-263, Cys-269-Cys-287, and Cys-288-Cys-293. 4 N-linked (GlcNAc...) asparagine glycosylation sites follow: Asn-184, Asn-194, Asn-222, and Asn-255. Gly-305 carries GPI-anchor amidated glycine lipidation. Positions 306–335 are cleaved as a propeptide — removed in mature form; it reads AAPQPGPAHLSLTITLLMTARLWGGTLLWT.

Monomer. Interacts with MRC2. Interacts (via the UPAR/Ly6 domains) with SRPX2. Interacts with FAP (seprase); the interaction occurs at the cell surface of invadopodia membrane. Interacts with SORL1 (via N-terminal ectodomain); this interaction decreases PLAUR internalization. The ternary complex composed of PLAUR-PLAU-SERPINE1 also interacts with SORL1. Interacts with CD82; this interaction prevents PLAUR from binding to its high affinity ligand PLAU. As to expression, expressed in neurons of the rolandic area of the brain (at protein level). Expressed in the brain.

The protein localises to the cell membrane. It is found in the cell projection. The protein resides in the invadopodium membrane. Its subcellular location is the secreted. Its function is as follows. Acts as a receptor for urokinase plasminogen activator. Plays a role in localizing and promoting plasmin formation. Mediates the proteolysis-independent signal transduction activation effects of U-PA. It is subject to negative-feedback regulation by U-PA which cleaves it into an inactive form. The polypeptide is Urokinase plasminogen activator surface receptor (PLAUR) (Homo sapiens (Human)).